Here is a 331-residue protein sequence, read N- to C-terminus: 5-dehydro-2-deoxygluconokinase (331 aa).

The protein belongs to the carbohydrate kinase PfkB family.

The enzyme catalyses 5-dehydro-2-deoxy-D-gluconate + ATP = 6-phospho-5-dehydro-2-deoxy-D-gluconate + ADP + H(+). The protein operates within polyol metabolism; myo-inositol degradation into acetyl-CoA; acetyl-CoA from myo-inositol: step 5/7. Catalyzes the phosphorylation of 5-dehydro-2-deoxy-D-gluconate (2-deoxy-5-keto-D-gluconate or DKG) to 6-phospho-5-dehydro-2-deoxy-D-gluconate (DKGP). This is 5-dehydro-2-deoxygluconokinase from Photobacterium profundum (strain SS9).